The chain runs to 443 residues: Phosphoribosylamine--glycine ligase (443 aa).

The ATP-grasp domain maps to 109–324 (RNLFKKYNIK…FLDVCFGISN (216 aa)). 140–202 (MTGLGKDVVV…EEKLVGVEFT (63 aa)) contacts ATP. Gln282, Glu294, and Asn296 together coordinate Mg(2+). 3 residues coordinate Mn(2+): Gln282, Glu294, and Asn296.

It belongs to the GARS family. Mg(2+) is required as a cofactor. It depends on Mn(2+) as a cofactor.

It carries out the reaction 5-phospho-beta-D-ribosylamine + glycine + ATP = N(1)-(5-phospho-beta-D-ribosyl)glycinamide + ADP + phosphate + H(+). It functions in the pathway purine metabolism; IMP biosynthesis via de novo pathway; N(1)-(5-phospho-D-ribosyl)glycinamide from 5-phospho-alpha-D-ribose 1-diphosphate: step 2/2. This is Phosphoribosylamine--glycine ligase from Methanococcus vannielii (strain ATCC 35089 / DSM 1224 / JCM 13029 / OCM 148 / SB).